A 371-amino-acid chain; its full sequence is Histidinol-phosphate aminotransferase (371 aa).

K228 is subject to N6-(pyridoxal phosphate)lysine.

It belongs to the class-II pyridoxal-phosphate-dependent aminotransferase family. Histidinol-phosphate aminotransferase subfamily. The cofactor is pyridoxal 5'-phosphate.

The enzyme catalyses L-histidinol phosphate + 2-oxoglutarate = 3-(imidazol-4-yl)-2-oxopropyl phosphate + L-glutamate. Its pathway is amino-acid biosynthesis; L-histidine biosynthesis; L-histidine from 5-phospho-alpha-D-ribose 1-diphosphate: step 7/9. This Methanococcus maripaludis (strain C5 / ATCC BAA-1333) protein is Histidinol-phosphate aminotransferase.